Consider the following 92-residue polypeptide: Small ribosomal subunit protein uS19c (92 aa).

Belongs to the universal ribosomal protein uS19 family.

The protein resides in the plastid. Its function is as follows. Protein S19 forms a complex with S13 that binds strongly to the 16S ribosomal RNA. The chain is Small ribosomal subunit protein uS19c from Aneura mirabilis (Parasitic liverwort).